The chain runs to 241 residues: Centromere protein H (241 aa).

An N-acetylmethionine modification is found at Met-1. The interval 1-24 (MEEQPRERSEAGAEACEEKRGLSQ) is disordered. A coiled-coil region spans residues 28–186 (ERIEDRISLL…KEDVDKMENS (159 aa)). Lys-61 participates in a covalent cross-link: Glycyl lysine isopeptide (Lys-Gly) (interchain with G-Cter in SUMO2). A Phosphothreonine modification is found at Thr-62.

The protein belongs to the CENP-H/MCM16 family. As to quaternary structure, self-associates. Component of the CENPA-NAC complex, at least composed of CENPA, CENPC, CENPH, CENPM, CENPN, CENPT and CENPU. The CENPA-NAC complex interacts with the CENPA-CAD complex, composed of CENPI, CENPK, CENPL, CENPO, CENPP, CENPQ, CENPR and CENPS. Interacts directly with CENPK. Interacts with KIF2C and NDC80. Interacts with TRIM36. In terms of tissue distribution, abundantly expressed in thymus, spleen, uterus, ovary, testis and muscle, and weakly expressed in small intestine, lung and stomach. Barely detectable expression in kidney, liver, skin and prostate gland. Not detected in brain, heart or adrenal gland. Also expressed weakly in various hematopoietic cell lines.

It localises to the nucleus. Its subcellular location is the chromosome. The protein resides in the centromere. The protein localises to the kinetochore. In terms of biological role, component of the CENPA-NAC (nucleosome-associated) complex, a complex that plays a central role in assembly of kinetochore proteins, mitotic progression and chromosome segregation. The CENPA-NAC complex recruits the CENPA-CAD (nucleosome distal) complex and may be involved in incorporation of newly synthesized CENPA into centromeres. Required for chromosome congression and efficiently align the chromosomes on a metaphase plate. The protein is Centromere protein H of Mus musculus (Mouse).